The primary structure comprises 316 residues: MDALLKEIEKLSQPSSLQKENNDVCDLCFMQMKKISNYQLLCEECGQLKDWFEPDYNEKFTVYSRLKIVGANSSYHQRDLDKANSSDYSSLQFHHILEELKSLNVKYMDAGQKPFPIQVLKETAHSYNQVQQHRVIRSITKLQILASILRSICLKLNIACTVADAARFTQLNTKGISRGMDLLRSLFEDNKITLNVDLNPIDSFINSTYSALQIKQIHQELQEENVYNLKEIVKSFIVYADEKNIGVDLNRRTVVIATMYNVLRRAYYPIEIDTVVYQCKIRKNTITRALKMYEDYYSHFKSLYEQYQLNAAKKLI.

It belongs to the asfivirus C315R family.

In terms of biological role, putative initation factor. This chain is Initiation factor TFIIB homolog, found in Ornithodoros (relapsing fever ticks).